Here is a 157-residue protein sequence, read N- to C-terminus: Endoribonuclease YbeY (157 aa).

Zn(2+) contacts are provided by histidine 114, histidine 118, and histidine 124.

It belongs to the endoribonuclease YbeY family. It depends on Zn(2+) as a cofactor.

The protein resides in the cytoplasm. Single strand-specific metallo-endoribonuclease involved in late-stage 70S ribosome quality control and in maturation of the 3' terminus of the 16S rRNA. The polypeptide is Endoribonuclease YbeY (Yersinia pseudotuberculosis serotype O:3 (strain YPIII)).